The primary structure comprises 158 residues: Nucleoside diphosphate kinase (158 aa).

ATP contacts are provided by lysine 16, phenylalanine 64, arginine 92, threonine 98, arginine 109, and asparagine 119. Histidine 122 (pros-phosphohistidine intermediate) is an active-site residue.

The protein belongs to the NDK family. The cofactor is Mg(2+).

It is found in the cytoplasm. The catalysed reaction is a 2'-deoxyribonucleoside 5'-diphosphate + ATP = a 2'-deoxyribonucleoside 5'-triphosphate + ADP. It carries out the reaction a ribonucleoside 5'-diphosphate + ATP = a ribonucleoside 5'-triphosphate + ADP. Major role in the synthesis of nucleoside triphosphates other than ATP. The ATP gamma phosphate is transferred to the NDP beta phosphate via a ping-pong mechanism, using a phosphorylated active-site intermediate. The sequence is that of Nucleoside diphosphate kinase from Haloquadratum walsbyi (strain DSM 16790 / HBSQ001).